A 284-amino-acid chain; its full sequence is Glutamate 5-kinase 2 (284 aa).

Lys26 contacts ATP. Ser67, Asp154, and Asn166 together coordinate substrate. ATP is bound by residues 186 to 187 (SD) and 228 to 234 (SGGMVTK).

This sequence belongs to the glutamate 5-kinase family.

The protein localises to the cytoplasm. The catalysed reaction is L-glutamate + ATP = L-glutamyl 5-phosphate + ADP. The protein operates within amino-acid biosynthesis; L-proline biosynthesis; L-glutamate 5-semialdehyde from L-glutamate: step 1/2. Functionally, catalyzes the transfer of a phosphate group to glutamate to form L-glutamate 5-phosphate. This is Glutamate 5-kinase 2 from Mesorhizobium japonicum (strain LMG 29417 / CECT 9101 / MAFF 303099) (Mesorhizobium loti (strain MAFF 303099)).